Consider the following 666-residue polypeptide: MRFSTLVSLAAWAAAALACDSCSEPGKPAEHKRLVRRMQPEALGALTKPKGPLEWGQINFLHTTDTHGWLEGHLKEQNYGADWGDYSSFVKHMRQKADRLRVDLLLIDCGDLHDGNGLSDSTSPNGVISNEIFSRVDYDLLSIGNHELYVTDVAYETFANFSKVYGERYVTSNVQIINKETGEYEYIGSKYRYFTTKHGLKVMAFGVLFDFTGNSNVSKVIKAADLVQESWFIDAVKTPKPVDLFIIFGHTPARTDDKFPTLRTLRQKIQELRPGVPIQAFGGHNHVRDFVVYDETSTALGSGRYCETLGWLSMTGINSRTFRGSMKPRGVPNPTRRAIKGNATTSTQPYQHPRKGLDLRYARRYLDWNRLTFAYHASKSQDRQFDTQKGLKITHDITDARKQLNTSTVLGCVPETYCMSCVPFEAKNNIYQLVIDMLAKVVVKEDRADKPRLLLLNTGGVRFDLVKGPFTKDDEYIVYPFKNQFQYLPDVPYSIAKELLDALNKGPYQRRSEEYSPMAPQLSTNEVCANPSPEFVQLKRREAPQPYRPITRRTIDSSMLYPGYVTSDDFGLDGDDTPHSKIPYFKVPIDIQANASFPTNGSMPTVVDLAFVDYIGAKYVIPALNKLGGKYSASDIQSYKDFGSSSFLREYALEFWQEGLPNCTTN.

The first 18 residues, 1-18 (MRFSTLVSLAAWAAAALA), serve as a signal peptide directing secretion. N-linked (GlcNAc...) asparagine glycosylation is found at N160, N216, N342, N405, N594, N600, and N662. The disordered stretch occupies residues 323-353 (RGSMKPRGVPNPTRRAIKGNATTSTQPYQHP).

The protein resides in the secreted. In Arthroderma benhamiae (strain ATCC MYA-4681 / CBS 112371) (Trichophyton mentagrophytes), this protein is Secreted protein ARB_01864.